The following is a 357-amino-acid chain: GDP-mannose transporter 2 (357 aa).

Residues 1–43 (MASTRNGISKDELLPTYELQSQRDVENSGSVTSFASKISNNAA) lie on the Cytoplasmic side of the membrane. A helical transmembrane segment spans residues 44 to 64 (AAVLAYCLSSISMTLVNKYVV). Residues 65-68 (SGAS) are Lumenal-facing. The chain crosses the membrane as a helical span at residues 69-89 (WNLSFLYLAIQSFIGTVAIMV). Over 90–107 (CKKAGLIQNLGLFDLKKA) the chain is Cytoplasmic. The chain crosses the membrane as a helical span at residues 108-128 (QTWLPISLLLVGMIYTGNKAL). Position 129 (Gln-129) is a topological domain, lumenal. A helical membrane pass occupies residues 130–150 (FLSVPVYTIFKNLTIIVIAYG). Residues 151–161 (EVFMVGGSVKP) are Cytoplasmic-facing. The helical transmembrane segment at 162 to 182 (LALLSFGLMVLSSVVAAWADI) threads the bilayer. Topologically, residues 183 to 196 (QIATAATAKASSDS) are lumenal. The chain crosses the membrane as a helical span at residues 197–217 (AVATLSALNAGYAWMGTNVVF). At 218–238 (SASYALGMRRVIKKTNFDNWD) the chain is on the cytoplasmic side. A helical transmembrane segment spans residues 239–259 (VMFYNNLLSVPILLLSSLLVE). Topologically, residues 260 to 277 (DWSSENLQRNFPAESRQS) are lumenal. A helical transmembrane segment spans residues 278-298 (LVIGIFYSGVAAIFISYCTAW). Residues 299 to 306 (CVRATSST) are Cytoplasmic-facing. A helical membrane pass occupies residues 307 to 327 (TYAMVGALNKLPLAVAGIVFF). The Lumenal portion of the chain corresponds to 328–332 (AAPVT). Residues 333 to 352 (FGSVSAIVLGFISGLVYTWA) form a helical membrane-spanning segment. At 353-357 (KSTGA) the chain is on the cytoplasmic side.

The protein belongs to the TPT transporter family. SLC35D subfamily. In terms of assembly, homooligomer.

It is found in the golgi apparatus membrane. The protein resides in the cytoplasmic vesicle membrane. Its subcellular location is the endoplasmic reticulum membrane. Involved in the import of GDP-mannose from the cytoplasm into the Golgi lumen. The chain is GDP-mannose transporter 2 (gmt2) from Emericella nidulans (strain FGSC A4 / ATCC 38163 / CBS 112.46 / NRRL 194 / M139) (Aspergillus nidulans).